The following is a 363-amino-acid chain: GDSL esterase/lipase At3g14220 (363 aa).

The N-terminal stretch at 1–28 (MAKNRNLVFFLGVLASFTLSSFPVTVSG) is a signal peptide. Ser-39 serves as the catalytic Nucleophile. Active-site residues include Asp-318 and His-321.

The protein belongs to the 'GDSL' lipolytic enzyme family.

Its subcellular location is the secreted. In Arabidopsis thaliana (Mouse-ear cress), this protein is GDSL esterase/lipase At3g14220.